The chain runs to 425 residues: Putative E3 ubiquitin-protein ligase UBR7 (425 aa).

The UBR-type zinc finger occupies 44–116; sequence EKCSYSQGSV…KNLECKLLPD (73 aa). Residues 132 to 188 form a PHD-type; atypical zinc finger; the sequence is GLYCICKRPYPDPEDEIPDEMIQCVVCEDWFHGRHLGAIPPESGDFQEMVCQACMKR. Glycyl lysine isopeptide (Lys-Gly) (interchain with G-Cter in SUMO2) cross-links involve residues Lys225 and Lys252. The tract at residues 225–246 is disordered; that stretch reads KPENGEHQDSTLKEDVPEQGKD. Ser264 is subject to Phosphoserine. A Glycyl lysine isopeptide (Lys-Gly) (interchain with G-Cter in SUMO2) cross-link involves residue Lys274. Phosphoserine is present on Ser354. Lys398 participates in a covalent cross-link: Glycyl lysine isopeptide (Lys-Gly) (interchain with G-Cter in SUMO2).

As to expression, expressed in sperm (at protein level).

It catalyses the reaction S-ubiquitinyl-[E2 ubiquitin-conjugating enzyme]-L-cysteine + [acceptor protein]-L-lysine = [E2 ubiquitin-conjugating enzyme]-L-cysteine + N(6)-ubiquitinyl-[acceptor protein]-L-lysine.. It functions in the pathway protein modification; protein ubiquitination. Its function is as follows. E3 ubiquitin-protein ligase which is a component of the N-end rule pathway. Recognizes and binds to proteins bearing specific N-terminal residues that are destabilizing according to the N-end rule, leading to their ubiquitination and subsequent degradation. The protein is Putative E3 ubiquitin-protein ligase UBR7 (UBR7) of Homo sapiens (Human).